A 339-amino-acid chain; its full sequence is Phenylalanine--tRNA ligase alpha subunit (339 aa).

Mg(2+) is bound at residue Glu254.

It belongs to the class-II aminoacyl-tRNA synthetase family. Phe-tRNA synthetase alpha subunit type 1 subfamily. As to quaternary structure, tetramer of two alpha and two beta subunits. Mg(2+) is required as a cofactor.

The protein resides in the cytoplasm. The catalysed reaction is tRNA(Phe) + L-phenylalanine + ATP = L-phenylalanyl-tRNA(Phe) + AMP + diphosphate + H(+). In Clostridium botulinum (strain Alaska E43 / Type E3), this protein is Phenylalanine--tRNA ligase alpha subunit.